A 156-amino-acid chain; its full sequence is Small ribosomal subunit protein uS7 (156 aa).

The protein belongs to the universal ribosomal protein uS7 family. In terms of assembly, part of the 30S ribosomal subunit. Contacts proteins S9 and S11.

Its function is as follows. One of the primary rRNA binding proteins, it binds directly to 16S rRNA where it nucleates assembly of the head domain of the 30S subunit. Is located at the subunit interface close to the decoding center, probably blocks exit of the E-site tRNA. This Synechococcus sp. (strain CC9311) protein is Small ribosomal subunit protein uS7.